Consider the following 416-residue polypeptide: Serine hydroxymethyltransferase (416 aa).

(6S)-5,6,7,8-tetrahydrofolate is bound by residues leucine 121 and 125 to 127 (GHL). N6-(pyridoxal phosphate)lysine is present on lysine 229.

The protein belongs to the SHMT family. As to quaternary structure, homodimer. Pyridoxal 5'-phosphate serves as cofactor.

Its subcellular location is the cytoplasm. It catalyses the reaction (6R)-5,10-methylene-5,6,7,8-tetrahydrofolate + glycine + H2O = (6S)-5,6,7,8-tetrahydrofolate + L-serine. Its pathway is one-carbon metabolism; tetrahydrofolate interconversion. It functions in the pathway amino-acid biosynthesis; glycine biosynthesis; glycine from L-serine: step 1/1. Its function is as follows. Catalyzes the reversible interconversion of serine and glycine with tetrahydrofolate (THF) serving as the one-carbon carrier. This reaction serves as the major source of one-carbon groups required for the biosynthesis of purines, thymidylate, methionine, and other important biomolecules. Also exhibits THF-independent aldolase activity toward beta-hydroxyamino acids, producing glycine and aldehydes, via a retro-aldol mechanism. The chain is Serine hydroxymethyltransferase from Neisseria meningitidis serogroup C (strain 053442).